The primary structure comprises 254 residues: MLKIGDTEFTSRLFTGTGKFANDKNMLAAIGASNSELVTLAVKRLDLKTGSDNILKPLQQRRVKLLPNTAGARNVKEAIFAAHLSREMLGTNWIKLEIHPDPKYLMPDPIETLAAARILCEQGYVVLPYVHADPVLCRRLEEVGCAAVMPLGSPIGSNQGLATEPFLKIIIEQSQVPVVIDAGIGAPSQATRAMELGADAVLVNTAIASSADPVAMGRCFAQAVDTGRAAFIAGLGNVSEQANSTSPLTGFLNV.

Lysine 95 functions as the Schiff-base intermediate with DXP in the catalytic mechanism. Residues glycine 156, 182–183 (AG), and 204–205 (NT) contribute to the 1-deoxy-D-xylulose 5-phosphate site.

Belongs to the ThiG family. Homotetramer. Forms heterodimers with either ThiH or ThiS.

It is found in the cytoplasm. It catalyses the reaction [ThiS sulfur-carrier protein]-C-terminal-Gly-aminoethanethioate + 2-iminoacetate + 1-deoxy-D-xylulose 5-phosphate = [ThiS sulfur-carrier protein]-C-terminal Gly-Gly + 2-[(2R,5Z)-2-carboxy-4-methylthiazol-5(2H)-ylidene]ethyl phosphate + 2 H2O + H(+). It functions in the pathway cofactor biosynthesis; thiamine diphosphate biosynthesis. Functionally, catalyzes the rearrangement of 1-deoxy-D-xylulose 5-phosphate (DXP) to produce the thiazole phosphate moiety of thiamine. Sulfur is provided by the thiocarboxylate moiety of the carrier protein ThiS. In vitro, sulfur can be provided by H(2)S. This Shewanella piezotolerans (strain WP3 / JCM 13877) protein is Thiazole synthase.